A 202-amino-acid chain; its full sequence is CASP-like protein 2B1 (202 aa).

The Cytoplasmic segment spans residues 1-29 (MSYLGVGVSPGNVPVYHGTNSKVIDRRVR). A helical membrane pass occupies residues 30 to 50 (LAELVLRCVICCLGVLAAVLV). The Extracellular portion of the chain corresponds to 51–72 (GTDTQVKEIFSIQKKARFTDMK). A helical membrane pass occupies residues 73–93 (ALVFLVAANGIAAAYSFVQGV). At 94 to 109 (RCVVGMVKGSVLFSKP) the chain is on the cytoplasmic side. A helical transmembrane segment spans residues 110–132 (LAWVIFSGDQMMAYLTMSAVAAA). The Extracellular segment spans residues 133–164 (AQSSVFAKLGQPDLQWMKICTMYGKFCNQVGE). The helical transmembrane segment at 165 to 185 (GIASALLVSVSMVVLSCISAF) threads the bilayer. The Cytoplasmic portion of the chain corresponds to 186–202 (SLFRLYGGNKGKDGARW).

It belongs to the Casparian strip membrane proteins (CASP) family. As to quaternary structure, homodimer and heterodimers.

It localises to the cell membrane. In Populus trichocarpa (Western balsam poplar), this protein is CASP-like protein 2B1.